Here is a 1399-residue protein sequence, read N- to C-terminus: Dicer-like protein 2 (1399 aa).

The Helicase ATP-binding domain occupies 18–194 (MVEESMQSNI…EDLQQIERNL (177 aa)). Residue 31-38 (MDTGSGKT) coordinates ATP. A DEAH box motif is present at residues 139–142 (DEAH). The region spanning 364-549 (KLQLLIKFLV…QSETGHRNFE (186 aa)) is the Helicase C-terminal domain. Positions 562 to 656 (ASQHLHHFCS…LPARQEADDE (95 aa)) constitute a Dicer dsRNA-binding fold domain. RNase III domains lie at 897 to 1054 (LPSI…TVGG) and 1094 to 1270 (LDVL…IDSL). Mg(2+)-binding residues include Glu1133, Asp1256, and Glu1259. A DRBM domain is found at 1301–1370 (HPKERLGHLA…AWKAVGVLES (70 aa)).

The protein belongs to the helicase family. Dicer subfamily. It depends on Mg(2+) as a cofactor. The cofactor is Mn(2+).

Dicer-like endonuclease involved in cleaving double-stranded RNA in the RNA interference (RNAi) pathway. Produces 21 to 25 bp dsRNAs (siRNAs) which target the selective destruction of homologous RNAs leading to sequence-specific suppression of gene expression, called post-transcriptional gene silencing (PTGS). Part of a broad host defense response against viral infection and transposons. The polypeptide is Dicer-like protein 2 (DCL2) (Phaeosphaeria nodorum (strain SN15 / ATCC MYA-4574 / FGSC 10173) (Glume blotch fungus)).